The sequence spans 63 residues: Cecropin-B (63 aa).

Positions 1 to 23 are cleaved as a signal peptide; the sequence is MNFNKIFVFVALILAISLGNSEA. Residue Arg-62 is modified to Arginine amide.

The protein belongs to the cecropin family. Strongly expressed in larval, pupal and adult fat body and hemocytes after injection of bacteria. Maximal expression is seen in pupae.

It localises to the secreted. Cecropins have lytic and antibacterial activity against several Gram-positive and Gram-negative bacteria. This Drosophila melanogaster (Fruit fly) protein is Cecropin-B (CecB).